Reading from the N-terminus, the 173-residue chain is Peptidoglycan-associated lipoprotein (173 aa).

Positions 1–21 (MKSKKIFKILTLLLPMITTFS) are cleaved as a signal peptide. Residue cysteine 22 is the site of N-palmitoyl cysteine attachment. Residue cysteine 22 is the site of S-diacylglycerol cysteine attachment. The 115-residue stretch at 59 to 173 (ETLEKLKKGN…KNRRSVIIYQ (115 aa)) folds into the OmpA-like domain.

Belongs to the Pal lipoprotein family.

It localises to the cell outer membrane. This Buchnera aphidicola subsp. Baizongia pistaciae (strain Bp) protein is Peptidoglycan-associated lipoprotein.